Consider the following 121-residue polypeptide: Small ribosomal subunit protein uS13 (121 aa).

The disordered stretch occupies residues 96–121; sequence PVRGQNTKNNARTRKGKAVAIAGKKK. Residues 106-121 are compositionally biased toward basic residues; sequence ARTRKGKAVAIAGKKK.

This sequence belongs to the universal ribosomal protein uS13 family. In terms of assembly, part of the 30S ribosomal subunit. Forms a loose heterodimer with protein S19. Forms two bridges to the 50S subunit in the 70S ribosome.

Functionally, located at the top of the head of the 30S subunit, it contacts several helices of the 16S rRNA. In the 70S ribosome it contacts the 23S rRNA (bridge B1a) and protein L5 of the 50S subunit (bridge B1b), connecting the 2 subunits; these bridges are implicated in subunit movement. Contacts the tRNAs in the A and P-sites. The sequence is that of Small ribosomal subunit protein uS13 from Streptococcus gordonii (strain Challis / ATCC 35105 / BCRC 15272 / CH1 / DL1 / V288).